A 119-amino-acid chain; its full sequence is MAIPSRLRRTTDQREALLRDLVTDLIINDRITTTEAKAKSVQRVADKMVTLAKKGTLAARRQAAETVRLEDAGEGKDALQKLFSVIAPRYNDRTGGYTRIIKTVPRRGDAAPMAIIEFI.

Belongs to the bacterial ribosomal protein bL17 family. Part of the 50S ribosomal subunit. Contacts protein L32.

In Acholeplasma laidlawii (strain PG-8A), this protein is Large ribosomal subunit protein bL17.